A 97-amino-acid chain; its full sequence is HssA/B-like protein 48 (97 aa).

Disordered regions lie at residues 1 to 20 (MTLF…SKSS) and 78 to 97 (GSGY…CCGI).

This sequence belongs to the hssA/B family.

The chain is HssA/B-like protein 48 (hssl48) from Dictyostelium discoideum (Social amoeba).